A 158-amino-acid polypeptide reads, in one-letter code: Snaclec crotocetin-1 (158 aa).

The signal sequence occupies residues 1-23 (MGRFIFVSFGLLVVFLSLSGTGA). Cystine bridges form between cysteine 27–cysteine 38, cysteine 55–cysteine 152, and cysteine 127–cysteine 144. Positions 34–153 (YDQYCYRVIK…CEEKNLFVCK (120 aa)) constitute a C-type lectin domain.

Belongs to the snaclec family. As to quaternary structure, heterodimer; disulfide-linked. As to expression, expressed by the venom gland.

It is found in the secreted. In terms of biological role, interferes with one step of hemostasis (modulation of platelet aggregation, or coagulation cascade, for example). This Crotalus durissus terrificus (South American rattlesnake) protein is Snaclec crotocetin-1.